We begin with the raw amino-acid sequence, 208 residues long: Protein-L-isoaspartate O-methyltransferase (208 aa).

Serine 59 is an active-site residue.

It belongs to the methyltransferase superfamily. L-isoaspartyl/D-aspartyl protein methyltransferase family.

It is found in the cytoplasm. The catalysed reaction is [protein]-L-isoaspartate + S-adenosyl-L-methionine = [protein]-L-isoaspartate alpha-methyl ester + S-adenosyl-L-homocysteine. Its function is as follows. Catalyzes the methyl esterification of L-isoaspartyl residues in peptides and proteins that result from spontaneous decomposition of normal L-aspartyl and L-asparaginyl residues. It plays a role in the repair and/or degradation of damaged proteins. This chain is Protein-L-isoaspartate O-methyltransferase, found in Serratia proteamaculans (strain 568).